A 66-amino-acid chain; its full sequence is DNA-directed RNA polymerase subunit Rpo10 (66 aa).

Zn(2+) is bound by residues C7, C10, C47, and C48.

It belongs to the archaeal Rpo10/eukaryotic RPB10 RNA polymerase subunit family. As to quaternary structure, part of the RNA polymerase complex. Zn(2+) serves as cofactor.

The protein localises to the cytoplasm. It carries out the reaction RNA(n) + a ribonucleoside 5'-triphosphate = RNA(n+1) + diphosphate. In terms of biological role, DNA-dependent RNA polymerase (RNAP) catalyzes the transcription of DNA into RNA using the four ribonucleoside triphosphates as substrates. This chain is DNA-directed RNA polymerase subunit Rpo10, found in Haloarcula marismortui (strain ATCC 43049 / DSM 3752 / JCM 8966 / VKM B-1809) (Halobacterium marismortui).